Reading from the N-terminus, the 781-residue chain is Putative amine oxidase [copper-containing] (781 aa).

The N-terminal stretch at 1-34 is a signal peptide; sequence MSLPKTANGMDKLKLCYLLLFYLGSSSLTEVSGA. Cysteines 199 and 203 form a disulfide. Position 385 to 395 (385 to 395) interacts with substrate; the sequence is FFDSSYMIGMN. D387 functions as the Proton acceptor in the catalytic mechanism. C405 and C432 are disulfide-bonded. Residue 472–477 participates in substrate binding; it reads IANYDY. Y475 functions as the Schiff-base intermediate with substrate; via topaquinone in the catalytic mechanism. Y475 carries the 2',4',5'-topaquinone modification. 2 residues coordinate Cu cation: H525 and H527. Ca(2+) contacts are provided by D534, D536, E579, F671, D674, E676, D682, and L683. Residues D534 and D536 each contribute to the Mn(2+) site. D682 is a Mn(2+) binding site. H693 is a Cu cation binding site.

This sequence belongs to the copper/topaquinone oxidase family. Homodimer. It depends on Cu cation as a cofactor. Ca(2+) is required as a cofactor. Requires L-topaquinone as cofactor. Mn(2+) serves as cofactor. Post-translationally, topaquinone (TPQ) is generated by copper-dependent autoxidation of a specific tyrosyl residue. As to expression, prismatic layer of shell (at protein level). Expressed primarily in the mantle with highest level in the mantle edge and lower level in the mantle pallium.

The protein resides in the secreted. In Margaritifera margaritifera (Freshwater pearl mussel), this protein is Putative amine oxidase [copper-containing].